A 971-amino-acid chain; its full sequence is Outer capsid protein VP2 (971 aa).

Belongs to the orbivirus VP2 family.

It is found in the virion. The VP2 protein is one of the two proteins (with VP5) which constitute the virus particle outer capsid. It is the major target of the host immunogenic response. This chain is Outer capsid protein VP2 (Segment-2), found in Epizootic hemorrhagic disease virus 1 (EHDV-1).